A 1201-amino-acid chain; its full sequence is DNA-directed RNA polymerase subunit beta' (1201 aa).

Residues Cys-60, Cys-62, Cys-75, and Cys-78 each contribute to the Zn(2+) site. Mg(2+)-binding residues include Asp-449, Asp-451, and Asp-453. Zn(2+) is bound by residues Cys-818, Cys-892, Cys-899, and Cys-902.

This sequence belongs to the RNA polymerase beta' chain family. In terms of assembly, the RNAP catalytic core consists of 2 alpha, 1 beta, 1 beta' and 1 omega subunit. When a sigma factor is associated with the core the holoenzyme is formed, which can initiate transcription. Mg(2+) is required as a cofactor. It depends on Zn(2+) as a cofactor.

The catalysed reaction is RNA(n) + a ribonucleoside 5'-triphosphate = RNA(n+1) + diphosphate. Functionally, DNA-dependent RNA polymerase catalyzes the transcription of DNA into RNA using the four ribonucleoside triphosphates as substrates. In Listeria monocytogenes serotype 4b (strain F2365), this protein is DNA-directed RNA polymerase subunit beta'.